The primary structure comprises 2209 residues: Orsellinic acid synthase armB (2209 aa).

The interval 38–261 (LLLDACYYAF…HKTTVDALYH (224 aa)) is N-terminal acylcarrier protein transacylase domain (SAT). One can recognise a Ketosynthase family 3 (KS3) domain in the interval 391–817 (QEPIAICGMS…GSNGALLLEE (427 aa)). Residues C561, H696, and H736 each act as for beta-ketoacyl synthase activity in the active site. The malonyl-CoA:ACP transacylase (MAT) domain stretch occupies residues 914 to 1239 (VFVFSGQGGQ…NLTLSSSLSQ (326 aa)). The active-site For acyl/malonyl transferase activity is the S1008. Residues 1306 to 1436 (MLQSWAQFPS…GQFRPLLVAD (131 aa)) are N-terminal hotdog fold. Residues 1306-1613 (MLQSWAQFPS…FKKLRLNTLQ (308 aa)) enclose the PKS/mFAS DH domain. The interval 1335 to 1610 (ITGHIVGDVP…GMCFKKLRLN (276 aa)) is product template (PT) domain. Catalysis depends on H1338, which acts as the Proton acceptor; for dehydratase activity. The interval 1463 to 1613 (AEVITTRTAY…FKKLRLNTLQ (151 aa)) is C-terminal hotdog fold. The Proton donor; for dehydratase activity role is filled by D1524. Carrier domains lie at 1659 to 1734 (VDVQ…SSTI) and 1844 to 1921 (SSSS…SSKQ). O-(pantetheine 4'-phosphoryl)serine occurs at positions 1693 and 1881. Residues 1917–1945 (ISSKQPGKSPKPSEEATMDPDKEEDLSDL) are disordered. Residues 1932–1943 (ATMDPDKEEDLS) are compositionally biased toward acidic residues. The segment at 1962 to 2201 (VPMSVQKSSS…LGAVTQALVD (240 aa)) is thioesterase (TE) domain.

It catalyses the reaction 3 malonyl-CoA + acetyl-CoA + 2 H(+) = orsellinate + 3 CO2 + 4 CoA. The protein operates within secondary metabolite biosynthesis. In terms of biological role, non-reducing polyketide synthase, part of the gene cluster that mediates the biosynthesis of melleolides, a range of antifungal and phytotoxic polyketide derivatives composed of an orsellinic acid (OA) moiety esterified to various sesquiterpene alcohols. The first step in melleolides biosynthesis is performed by the delta(6)-protoilludene synthase PRO1 which catalyzes the cyclization of farnesyl diphosphate to protoilludene. The orsellinic acid synthase armB produces OA by condensing acetyl-CoA with 3 malonyl-CoA units in a three-round chain elongation reaction folowed by a C2-C7 ring closure. ArmB further catalyzes the trans-esterification of OA to the various sesquiterpene alcohols resulting from the hydroxylation of protoilludene. The melleolides cluster also includes 5 cytochrome P450 monooxygenases, 4 NAD(+)-dependent oxidoreductases, one flavin-dependent oxidoreductase, and one O-methyltransferase. The cytochrome P450 monooxygenases may be involved in protoilludene hydroxylation to elaborate melleolides with multiple alcohol groups, such as melleolide D, which carries alcohol functionalities at C-4, C-5, C-10, and C-13. The role of the NAD(+)-dependent enzymes remains unknown. Numerous melleolides, including arnamial, show 5'-O-methylation of the aromatic moiety which may be catalyzed by the methyltransferase encoded in the cluster. The flavin-dependent oxidoreductase might represent the dehydrogenase yielding the aldehyde in position 1 of arnamial and other melleolides. Finally, several halogenase localized outside of the cluster (armH1 to armH5), are able to catalyze the transfer of a single chlorine atom to the melleolide backbone, resulting in a 6'-chloromelleolide product. The polypeptide is Orsellinic acid synthase armB (Armillaria mellea (Honey mushroom)).